The sequence spans 448 residues: Protein king tubby (448 aa).

Residues 103 to 195 (HELEDEESSP…NGTGGESEGD (93 aa)) form a disordered region. Over residues 118–133 (QHQQSASHSANSTQSQ) the composition is skewed to low complexity. S141 carries the post-translational modification Phosphoserine. Residues 182-191 (NGTGNGTGGE) are compositionally biased toward gly residues.

It belongs to the TUB family.

The protein localises to the cytoplasm. Its subcellular location is the nucleus. The protein resides in the cell projection. It localises to the cilium membrane. It is found in the rhabdomere. The protein is Protein king tubby of Drosophila erecta (Fruit fly).